The primary structure comprises 155 residues: Small ribosomal subunit protein uS7c (155 aa).

Belongs to the universal ribosomal protein uS7 family. As to quaternary structure, part of the 30S ribosomal subunit.

Its subcellular location is the plastid. The protein resides in the chloroplast. In terms of biological role, one of the primary rRNA binding proteins, it binds directly to 16S rRNA where it nucleates assembly of the head domain of the 30S subunit. The chain is Small ribosomal subunit protein uS7c (rps7) from Typha angustifolia (Narrow leaf cattail).